We begin with the raw amino-acid sequence, 102 residues long: Putative pterin-4-alpha-carbinolamine dehydratase (102 aa).

Belongs to the pterin-4-alpha-carbinolamine dehydratase family.

It carries out the reaction (4aS,6R)-4a-hydroxy-L-erythro-5,6,7,8-tetrahydrobiopterin = (6R)-L-erythro-6,7-dihydrobiopterin + H2O. The sequence is that of Putative pterin-4-alpha-carbinolamine dehydratase from Burkholderia vietnamiensis (strain G4 / LMG 22486) (Burkholderia cepacia (strain R1808)).